We begin with the raw amino-acid sequence, 345 residues long: MNINDFDFDLPEELIAQTPLEKRSESRLLILDPKTEELEDRHFYNIIDELEAGDALVLNNTRVLPARLHGERAETGGHIELLLLKDMGQNRWETLAKPARKMKVGEEVVFGDGRLKAVVVEVLDHGGRIVEFKYDGIFLEILESLGEMPLPPYIHEQLQDQERYQTVFAKENGSAAAPTAGLHYTPELLEKIADKGVKIVELTLHVGLGTFRPVSVDNVDEHQMHSEFYRLTEEAAAQLRAVKASGHKIVASGTTSIRTLETIGSKFDGDIQADSGWTDIFIKPGYEWKVVDAFNTNFHLPKSTLVMLVAAFAGRDFVLDAYQHAIDEKYRFFSFGDAMFVRPKK.

Belongs to the QueA family. As to quaternary structure, monomer.

The protein localises to the cytoplasm. It catalyses the reaction 7-aminomethyl-7-carbaguanosine(34) in tRNA + S-adenosyl-L-methionine = epoxyqueuosine(34) in tRNA + adenine + L-methionine + 2 H(+). It participates in tRNA modification; tRNA-queuosine biosynthesis. Its function is as follows. Transfers and isomerizes the ribose moiety from AdoMet to the 7-aminomethyl group of 7-deazaguanine (preQ1-tRNA) to give epoxyqueuosine (oQ-tRNA). The sequence is that of S-adenosylmethionine:tRNA ribosyltransferase-isomerase from Lactococcus lactis subsp. lactis (strain IL1403) (Streptococcus lactis).